The chain runs to 343 residues: NADH dehydrogenase [ubiquinone] 1 alpha subcomplex subunit 10, mitochondrial (343 aa).

A mitochondrion-targeting transit peptide spans 1–23 (MALRLLRLVPPRVGGIHTSVQFK). Residue lysine 110 is modified to N6-acetyllysine; alternate. Lysine 110 bears the N6-succinyllysine; alternate mark. At serine 238 the chain carries Phosphoserine; by PINK1.

It belongs to the complex I NDUFA10 subunit family. In terms of assembly, complex I is composed of 45 different subunits. This a component of the hydrophobic protein fraction. FAD is required as a cofactor. Phosphorylation at Ser-238 by PINK1 is required for the binding and/or reduction of the complex I substrate ubiquinone.

It localises to the mitochondrion matrix. Functionally, accessory subunit of the mitochondrial membrane respiratory chain NADH dehydrogenase (Complex I), that is believed not to be involved in catalysis. Complex I functions in the transfer of electrons from NADH to the respiratory chain. The immediate electron acceptor for the enzyme is believed to be ubiquinone. The chain is NADH dehydrogenase [ubiquinone] 1 alpha subcomplex subunit 10, mitochondrial (NDUFA10) from Bos taurus (Bovine).